The sequence spans 334 residues: Dihydroorotate dehydrogenase (quinone) (334 aa).

FMN contacts are provided by residues 59-63 (AGLDK) and Thr-83. Residue Lys-63 participates in substrate binding. 108 to 112 (NRMGF) contributes to the substrate binding site. FMN-binding residues include Asn-136 and Asn-169. Substrate is bound at residue Asn-169. Catalysis depends on Ser-172, which acts as the Nucleophile. Asn-174 contributes to the substrate binding site. FMN-binding residues include Lys-214 and Thr-242. 243–244 (NT) contacts substrate. Residues Gly-265, Gly-294, and 315–316 (YS) each bind FMN.

The protein belongs to the dihydroorotate dehydrogenase family. Type 2 subfamily. In terms of assembly, monomer. The cofactor is FMN.

The protein localises to the cell membrane. The enzyme catalyses (S)-dihydroorotate + a quinone = orotate + a quinol. The protein operates within pyrimidine metabolism; UMP biosynthesis via de novo pathway; orotate from (S)-dihydroorotate (quinone route): step 1/1. Catalyzes the conversion of dihydroorotate to orotate with quinone as electron acceptor. This Acinetobacter baylyi (strain ATCC 33305 / BD413 / ADP1) protein is Dihydroorotate dehydrogenase (quinone).